A 207-amino-acid chain; its full sequence is Ribosomal RNA small subunit methyltransferase G (207 aa).

S-adenosyl-L-methionine contacts are provided by residues G73, L78, 124–125 (VE), and R139.

The protein belongs to the methyltransferase superfamily. RNA methyltransferase RsmG family.

Its subcellular location is the cytoplasm. It carries out the reaction guanosine(527) in 16S rRNA + S-adenosyl-L-methionine = N(7)-methylguanosine(527) in 16S rRNA + S-adenosyl-L-homocysteine. Its function is as follows. Specifically methylates the N7 position of guanine in position 527 of 16S rRNA. This chain is Ribosomal RNA small subunit methyltransferase G, found in Cronobacter sakazakii (strain ATCC BAA-894) (Enterobacter sakazakii).